Here is a 513-residue protein sequence, read N- to C-terminus: 2-isopropylmalate synthase (513 aa).

A Pyruvate carboxyltransferase domain is found at 5-268 (LIIFDTTLRD…DVGVDTTQIV (264 aa)). Asp-14, His-202, His-204, and Asn-239 together coordinate Mn(2+). The regulatory domain stretch occupies residues 394–513 (RFVSLSQRSE…KSSEKLNPQI (120 aa)).

Belongs to the alpha-IPM synthase/homocitrate synthase family. LeuA type 1 subfamily. Homodimer. Mn(2+) is required as a cofactor.

It is found in the cytoplasm. It catalyses the reaction 3-methyl-2-oxobutanoate + acetyl-CoA + H2O = (2S)-2-isopropylmalate + CoA + H(+). The protein operates within amino-acid biosynthesis; L-leucine biosynthesis; L-leucine from 3-methyl-2-oxobutanoate: step 1/4. In terms of biological role, catalyzes the condensation of the acetyl group of acetyl-CoA with 3-methyl-2-oxobutanoate (2-ketoisovalerate) to form 3-carboxy-3-hydroxy-4-methylpentanoate (2-isopropylmalate). In Ralstonia nicotianae (strain ATCC BAA-1114 / GMI1000) (Ralstonia solanacearum), this protein is 2-isopropylmalate synthase.